The primary structure comprises 235 residues: Large ribosomal subunit protein uL1 (235 aa).

The protein belongs to the universal ribosomal protein uL1 family. In terms of assembly, part of the 50S ribosomal subunit.

Functionally, binds directly to 23S rRNA. The L1 stalk is quite mobile in the ribosome, and is involved in E site tRNA release. Protein L1 is also a translational repressor protein, it controls the translation of the L11 operon by binding to its mRNA. The sequence is that of Large ribosomal subunit protein uL1 from Rhodospirillum centenum (strain ATCC 51521 / SW).